We begin with the raw amino-acid sequence, 25 residues long: M-poneritoxin-Na1b (25 aa).

Belongs to the non-disulfide-bridged peptide (NDBP) superfamily. Medium-length antimicrobial peptide (group 3) family. Ponericin-W subfamily. Expressed by the venom gland.

Its subcellular location is the secreted. The protein resides in the target cell membrane. In terms of biological role, membrane-perturbating peptide with multiple activities. It is insecticidal, since it induces reversible paralysis in insects (L.cuprina) after 1 hour, but fails to kill flies. It shows a relatively strong and broad-spectrum antibacterial activity against both Gram-positive and Gram-negative bacteria (MIC&lt;20 uM). It is also anthelmintic, since it potently inhibits the larval development of the major pathogenic nematode of ruminants (H.contortus, IC(50)=2.8 uM). Interestingly, only at 10 uM, it increases adult males motility of the other nematode B.malayi for 24 hours post-treatment, followed by a reduction in motility for the rest of the experiment. It shows cytotoxic activity against HEK293 cells (EC(50)=4-6 uM) and induces hemolysis in human erythrocytes (EC(50)=40-62 uM). In addition, it causes an important increase in intracellular calcium concentration on neuronal and epithelial cell lines, which supports a non-specific membrane perturbation mechanism of action. In vivo, it induces pain by intraplantar injection into mice, suggesting a defensive function against vertebrate predators. In Neoponera apicalis (Ant), this protein is M-poneritoxin-Na1b.